Reading from the N-terminus, the 245-residue chain is tRNA (guanine-N(1)-)-methyltransferase (245 aa).

S-adenosyl-L-methionine is bound by residues glycine 111 and 131 to 136; that span reads IGDYVL.

It belongs to the RNA methyltransferase TrmD family. In terms of assembly, homodimer.

It is found in the cytoplasm. The enzyme catalyses guanosine(37) in tRNA + S-adenosyl-L-methionine = N(1)-methylguanosine(37) in tRNA + S-adenosyl-L-homocysteine + H(+). In terms of biological role, specifically methylates guanosine-37 in various tRNAs. In Staphylococcus carnosus (strain TM300), this protein is tRNA (guanine-N(1)-)-methyltransferase.